A 558-amino-acid chain; its full sequence is MAKNRRDRNSWGGFSEKTYEWSSEEEEPVKKAGPVQVLIVKDDHSFELDETALNRILLSEAVRDKEVVAVSVAGAFRKGKSFLMDFMLRYMYNQESVDWVGDYNEPLTGFSWRGGSERETTGIQIWSEIFLINKPDGKKVAVLLMDTQGTFDSQSTLRDSATVFALSTMISSIQVYNLSQNVQEDDLQHLQLFTEYGRLAMEETFLKPFQSLIFLVRDWSFPYEFSYGADGGAKFLEKRLKVSGNQHEELQNVRKHIHSCFTNISCFLLPHPGLKVATNPNFDGKLKEIDDEFIKNLKILIPWLLSPESLDIKEINGNKITCRGLVEYFKAYIKIYQGEELPHPKSMLQATAEANNLAAVATAKDTYNKKMEEICGGDKPFLAPNDLQTKHLQLKEESVKLFRGVKKMGGEEFSRRYLQQLESEIDELYIQYIKHNDSKNIFHAARTPATLFVVIFITYVIAGVTGFIGLDIIASLCNMIMGLTLITLCTWAYIRYSGEYRELGAVIDQVAAALWDQGSTNEALYKLYSAAATHRHLYHQAFPTPKSESTEQSEKKKM.

The segment at 1–27 (MAKNRRDRNSWGGFSEKTYEWSSEEEE) is disordered. An N-terminal hypervariable region (HVR) region spans residues 1–34 (MAKNRRDRNSWGGFSEKTYEWSSEEEEPVKKAGP). Residues 1 to 449 (MAKNRRDRNS…NIFHAARTPA (449 aa)) are Cytoplasmic-facing. Residues Ser-10, Ser-22, and Ser-23 each carry the phosphoserine modification. Residues 64–309 (DKEVVAVSVA…LIPWLLSPES (246 aa)) enclose the GB1/RHD3-type G domain. Residues Arg-77, Lys-78, Gly-79, Lys-80, Ser-81, Phe-82, Gln-148, Arg-217, Asp-218, Val-276, and Asn-279 each coordinate GDP. Positions 77, 78, 79, 80, 81, and 82 each coordinate GTP. Position 81 (Ser-81) interacts with Mg(2+). Residues Arg-217, Asp-218, and Val-276 each coordinate GTP. A 3HB (three-helix bundle) domain region spans residues 347–438 (MLQATAEANN…YIQYIKHNDS (92 aa)). An N6-acetyllysine modification is found at Lys-395. Residues 412–439 (EFSRRYLQQLESEIDELYIQYIKHNDSK) are a coiled coil. The tract at residues 439-447 (KNIFHAART) is linker. A helical membrane pass occupies residues 450-470 (TLFVVIFITYVIAGVTGFIGL). Asp-471 is a topological domain (lumenal). A helical membrane pass occupies residues 472–492 (IIASLCNMIMGLTLITLCTWA). Residues 493–558 (YIRYSGEYRE…STEQSEKKKM (66 aa)) lie on the Cytoplasmic side of the membrane. The segment at 521–558 (NEALYKLYSAAATHRHLYHQAFPTPKSESTEQSEKKKM) is autoinhibitory domain.

This sequence belongs to the TRAFAC class dynamin-like GTPase superfamily. GB1/RHD3 GTPase family. GB1 subfamily. In terms of assembly, monomeric and homodimeric. The homodimer, transiently formed by two molecules on opposing membranes, is the active form mediating ER membrane fusion. Interacts with REEP1, REEP5, RTN3 and RTN4 (via the transmembrane region); these proteins are involved in endoplasmic reticulum tubular network organization. Interacts with ZFYVE27; both proteins are involved in endoplasmic reticulum tubular network organization. Interacts with ARL6IP1; both proteins are involved in endoplasmic reticulum tubular network organization. Interacts with SPAST; the interaction is direct, could recruit SPAST to Golgi membranes. Interacts (via N-terminal region) with MAP4K4 (via CNH regulatory domain). May interact with TMED2. Interacts with CPT1C. Post-translationally, phosphorylated. Phosphorylation, by different kinases, of the N-terminal hypervariable region (HVR) regulates the ATL1-mediated membrane tethering step.

Its subcellular location is the endoplasmic reticulum membrane. The protein localises to the golgi apparatus membrane. It is found in the cell projection. The protein resides in the axon. It carries out the reaction GTP + H2O = GDP + phosphate + H(+). In terms of biological role, atlastin-1 (ATL1) is a membrane-anchored GTPase that mediates the GTP-dependent fusion of endoplasmic reticulum (ER) membranes, maintaining the continuous ER network. It facilitates the formation of three-way junctions where ER tubules intersect. Two atlastin-1 on neighboring ER tubules bind GTP and form loose homodimers through the GB1/RHD3-type G domains and 3HB regions. Upon GTP hydrolysis, the 3HB regions tighten, pulling the membranes together to drive their fusion. After fusion, the homodimer disassembles upon release of inorganic phosphate (Pi). Subsequently, GDP dissociates, resetting the monomers to a conformation ready for a new fusion cycle. May also regulate more or less directly Golgi biogenesis. Indirectly regulates axonal development. This chain is Atlastin-1, found in Pongo abelii (Sumatran orangutan).